The sequence spans 437 residues: Adenylosuccinate synthetase (437 aa).

Residues 12 to 18 (GDEGKGK) and 40 to 42 (GHT) each bind GTP. The Proton acceptor role is filled by aspartate 13. Mg(2+) is bound by residues aspartate 13 and glycine 40. Residues 13–16 (DEGK), 38–41 (NAGH), threonine 128, arginine 142, glutamine 223, threonine 238, and arginine 302 contribute to the IMP site. Catalysis depends on histidine 41, which acts as the Proton donor. 298–304 (TTTGRRR) contributes to the substrate binding site. Residues arginine 304, 330–332 (KLD), and 412–414 (SLG) contribute to the GTP site.

The protein belongs to the adenylosuccinate synthetase family. Homodimer. Requires Mg(2+) as cofactor.

The protein resides in the cytoplasm. It carries out the reaction IMP + L-aspartate + GTP = N(6)-(1,2-dicarboxyethyl)-AMP + GDP + phosphate + 2 H(+). The protein operates within purine metabolism; AMP biosynthesis via de novo pathway; AMP from IMP: step 1/2. In terms of biological role, plays an important role in the de novo pathway of purine nucleotide biosynthesis. Catalyzes the first committed step in the biosynthesis of AMP from IMP. In Prochlorococcus marinus (strain MIT 9313), this protein is Adenylosuccinate synthetase.